A 377-amino-acid polypeptide reads, in one-letter code: Sodium-dependent organic anion transporter (377 aa).

At 1–29 the chain is on the extracellular side; that stretch reads MRANCSSSSACPANSSEEELPVGLEVHGN. Asn-4 carries an N-linked (GlcNAc...) asparagine glycan. The helical transmembrane segment at 30-50 threads the bilayer; the sequence is LELVFTVVSTVMMGLLMFSLG. The Cytoplasmic segment spans residues 51–67; the sequence is CSVEIRKLWSHIRRPWG. Residues 68-88 traverse the membrane as a helical segment; it reads IAVGLLCQFGLMPFTAYLLAI. Over 89-97 the chain is Extracellular; sequence SFSLKPVQA. The chain crosses the membrane as a helical span at residues 98-118; it reads IAVLIMGCCPGGTISNIFTFW. The Cytoplasmic segment spans residues 119–133; the sequence is VDGDMDLSISMTTCS. The helical transmembrane segment at 134–154 threads the bilayer; that stretch reads TVAALGMMPLCIYLYTWSWSL. The Extracellular portion of the chain corresponds to 155-159; that stretch reads QQNLT. Asn-157 is a glycosylation site (N-linked (GlcNAc...) asparagine). The chain crosses the membrane as a helical span at residues 160–180; the sequence is IPYQNIGITLVCLTIPVAFGV. At 181–195 the chain is on the cytoplasmic side; the sequence is YVNYRWPKQSKIILK. The chain crosses the membrane as a helical span at residues 196–216; sequence IGAVVGGVLLLVVAVAGVVLA. Topologically, residues 217–226 are extracellular; the sequence is KGSWNSDITL. The chain crosses the membrane as a helical span at residues 227-247; it reads LTISFIFPLIGHVTGFLLALF. The Cytoplasmic portion of the chain corresponds to 248 to 266; it reads THQSWQRCRTISLETGAQN. The helical transmembrane segment at 267–285 threads the bilayer; it reads IQMCITMLQLSFTAEHLVQ. At 286-290 the chain is on the extracellular side; the sequence is MLSFP. A helical membrane pass occupies residues 291–311; the sequence is LAYGLFQLIDGFLIVAAYQTY. Residues 312–377 lie on the Cytoplasmic side of the membrane; the sequence is KRRLKNKHGK…EPVGHITSCE (66 aa).

The protein belongs to the bile acid:sodium symporter (BASS) (TC 2.A.28) family. In terms of processing, glycosylated. In terms of tissue distribution, highly expressed in testis, placenta and pancreas. Moderately expressed in heart, lung and mammary gland. Weakly expressed in brain, colon, kidney, liver, ovary, prostate, small intestine, spleen and thymus.

Its subcellular location is the membrane. The catalysed reaction is estrone 3-sulfate(out) + 2 Na(+)(out) = estrone 3-sulfate(in) + 2 Na(+)(in). It catalyses the reaction 17beta-estradiol 3-sulfate(out) + 2 Na(+)(out) = 17beta-estradiol 3-sulfate(in) + 2 Na(+)(in). The enzyme catalyses dehydroepiandrosterone 3-sulfate(out) + 2 Na(+)(out) = dehydroepiandrosterone 3-sulfate(in) + 2 Na(+)(in). It carries out the reaction androst-5-ene-diol 3-sulfate(out) + 2 Na(+)(out) = androst-5-ene-diol 3-sulfate(in) + 2 Na(+)(in). The catalysed reaction is pregnenolone sulfate(out) + 2 Na(+)(out) = pregnenolone sulfate(in) + 2 Na(+)(in). It catalyses the reaction taurolithocholate 3-sulfate(out) + 2 Na(+)(out) = taurolithocholate 3-sulfate(in) + 2 Na(+)(in). The enzyme catalyses androsterone 3alpha-sulfate(out) + 2 Na(+)(out) = androsterone 3alpha-sulfate(in) + 2 Na(+)(in). It carries out the reaction 5alpha-dihydrotestosterone sulfate(out) + 2 Na(+)(out) = 5alpha-dihydrotestosterone sulfate(in) + 2 Na(+)(in). The catalysed reaction is 17beta-estradiol 17-sulfate(out) + 2 Na(+)(out) = 17beta-estradiol 17-sulfate(in) + 2 Na(+)(in). It catalyses the reaction 17alpha-hydroxypregnenolone 3-sulfate(out) + 2 Na(+)(out) = 17alpha-hydroxypregnenolone 3-sulfate(in) + 2 Na(+)(in). The enzyme catalyses epiandrosterone 3-sulfate(out) + 2 Na(+)(out) = epiandrosterone 3-sulfate(in) + 2 Na(+)(in). It carries out the reaction epitestosterone 17-sulfate(out) + 2 Na(+)(out) = epitestosterone 17-sulfate(in) + 2 Na(+)(in). The catalysed reaction is testosterone 17-sulfate(out) + 2 Na(+)(out) = testosterone 17-sulfate(in) + 2 Na(+)(in). It catalyses the reaction 16alpha-hydroxydehydroepiandrosterone 3-sulfate(out) + 2 Na(+)(out) = 16alpha-hydroxydehydroepiandrosterone 3-sulfate(in) + 2 Na(+)(in). Its function is as follows. Transports sulfoconjugated steroid hormones from the extracellular compartment into the cytosol in a sodium-dependent manner without hydrolysis. Steroid sulfate hormones are commonly considered to be biologically inactive metabolites, that may be activated by steroid sulfatases into free steroids. May play an important role by delivering sulfoconjugated steroids to specific target cells in reproductive organs. May play a role transporting the estriol precursor 16alpha-hydroxydehydroepiandrosterone 3-sulfate (16a-OH-DHEAS) at the fetal blood vessel endothelium. Can also transport other sulfoconjugated molecules such as taurolithocholic acid-3-sulfate and sulfoconjugated pyrenes. This Homo sapiens (Human) protein is Sodium-dependent organic anion transporter (SLC10A6).